The primary structure comprises 347 residues: NADH-ubiquinone oxidoreductase chain 2 (347 aa).

The next 11 membrane-spanning stretches (helical) occupy residues 3–23, 25–45, 59–79, 96–116, 122–142, 148–168, 178–198, 202–222, 240–260, 276–296, and 326–346; these read PLILLLITLTVILGTLIVMMS, HWLMIWMGFEMNMLAVIPLLM, YFLTQATASMLLMLAIIINLM, IIMTLALMMKLGLAPFHFWVP, ISLTSGLILLTWQKLAPLSIL, VINPDLLLMASMLSIAIGGWG, ILAYSSIAHMGWMMSVLAFNP, LLNLFMYILMTSTTFMLFMVA, ITTSILIMMLSLGGLPPLAGF, IILATLMAITALLNLFFYIRL, and LPPLIIMSTLTLPLAPAMILL.

Belongs to the complex I subunit 2 family. In terms of assembly, core subunit of respiratory chain NADH dehydrogenase (Complex I) which is composed of 45 different subunits. Interacts with TMEM242.

The protein resides in the mitochondrion inner membrane. The enzyme catalyses a ubiquinone + NADH + 5 H(+)(in) = a ubiquinol + NAD(+) + 4 H(+)(out). Core subunit of the mitochondrial membrane respiratory chain NADH dehydrogenase (Complex I) which catalyzes electron transfer from NADH through the respiratory chain, using ubiquinone as an electron acceptor. Essential for the catalytic activity and assembly of complex I. The sequence is that of NADH-ubiquinone oxidoreductase chain 2 from Peropteryx kappleri (Greater dog-like bat).